Here is a 284-residue protein sequence, read N- to C-terminus: Shikimate dehydrogenase (NADP(+)) (284 aa).

Shikimate-binding positions include 23–25 and Thr70; that span reads SLS. The Proton acceptor role is filled by Lys74. Position 86 (Glu86) interacts with NADP(+). Residues Asn95 and Asp111 each contribute to the shikimate site. NADP(+)-binding positions include 135-139, 159-164, and Ala227; these read GAGGA and NRTPGR. Residue Tyr229 coordinates shikimate. Gly251 lines the NADP(+) pocket.

It belongs to the shikimate dehydrogenase family. In terms of assembly, homodimer.

It catalyses the reaction shikimate + NADP(+) = 3-dehydroshikimate + NADPH + H(+). It participates in metabolic intermediate biosynthesis; chorismate biosynthesis; chorismate from D-erythrose 4-phosphate and phosphoenolpyruvate: step 4/7. Involved in the biosynthesis of the chorismate, which leads to the biosynthesis of aromatic amino acids. Catalyzes the reversible NADPH linked reduction of 3-dehydroshikimate (DHSA) to yield shikimate (SA). This Rubrobacter xylanophilus (strain DSM 9941 / JCM 11954 / NBRC 16129 / PRD-1) protein is Shikimate dehydrogenase (NADP(+)).